The primary structure comprises 533 residues: Ribonuclease Y (533 aa).

The segment at 16–41 is disordered; that stretch reads VERIRRRAEQDAAEQTERVRREAEQI. The span at 22–41 shows a compositional bias: basic and acidic residues; it reads RAEQDAAEQTERVRREAEQI. Residues 223–289 form the KH domain; the sequence is VVSVLHLPSD…RITLTALVSD (67 aa). Positions 349–442 constitute an HD domain; the sequence is VLAHLVESAH…TQAADQISGG (94 aa).

Belongs to the RNase Y family.

Its function is as follows. Endoribonuclease that initiates mRNA decay. The polypeptide is Ribonuclease Y (Parafrankia sp. (strain EAN1pec)).